The sequence spans 199 residues: Early activation antigen CD69 (199 aa).

A compositionally biased stretch (polar residues) spans 1–14 (MDSENCSITENSSS). The disordered stretch occupies residues 1-20 (MDSENCSITENSSSHLERGQ). Over 1–40 (MDSENCSITENSSSHLERGQKDHGTSIHFEKHHEGSIQVS) the chain is Cytoplasmic. The chain crosses the membrane as a helical; Signal-anchor for type II membrane protein span at residues 41-61 (IPWAVLIVVLITSLIIALIAL). Over 62-199 (NVGKYNCPGL…FHWVCSKPSR (138 aa)) the chain is Extracellular. Cystine bridges form between C85-C96, C113-C194, and C173-C186. A C-type lectin domain is found at 92 to 195 (YKRTCYFFST…CEANFHWVCS (104 aa)). N-linked (GlcNAc...) asparagine glycosylation is found at N150, N166, and N180.

Homodimer; disulfide-linked. Interacts with S100A8 and S100A9. Interacts with galactin-1/LGALS1. Interacts with S1PR1; this interaction mediates S1PR1 degradation. Interacts with JAK3 and STAT5. Constitutive Ser/Thr phosphorylation in both mature thymocytes and activated T-lymphocytes. As to expression, expressed on the surface of activated T-cells, B-cells, natural killer cells, neutrophils and platelets. Present also in eosinophils.

The protein resides in the cell membrane. In terms of biological role, transmembrane protein expressed mainly on T-cells resident in mucosa that plays an essential role in immune cell homeostasis. Rapidly expressed on the surface of platelets, T-lymphocytes and NK cells upon activation by various stimuli, such as antigen recognition or cytokine signaling, stimulates different signaling pathways in different cell types. Negatively regulates Th17 cell differentiation through its carbohydrate dependent interaction with galectin-1/LGALS1 present on immature dendritic cells. Association of CD69 cytoplasmic tail with the JAK3/STAT5 signaling pathway regulates the transcription of RORgamma/RORC and, consequently, differentiation toward the Th17 lineage. Also acts via the S100A8/S100A9 complex present on peripheral blood mononuclear cells to promote the conversion of naive CD4 T-cells into regulatory T-cells. Acts as an oxidized low-density lipoprotein (oxLDL) receptor in CD4 T-lymphocytes and negatively regulates the inflammatory response by inducing the expression of PDCD1 through the activation of NFAT. Participates in adipose tissue-derived mesenchymal stem cells (ASCs)-mediated protection against P.aeruginosa infection. Mechanistically, specifically recognizes P.aeruginosa to promote ERK1 activation, followed by granulocyte-macrophage colony-stimulating factor (GM-CSF) and other inflammatory cytokines secretion. In eosinophils, induces IL-10 production through the ERK1/2 pathway. Negatively regulates the chemotactic responses of effector lymphocytes and dendritic cells (DCs) to sphingosine 1 phosphate/S1P by acting as a S1PR1 receptor agonist and facilitating the internalization and degradation of the receptor. The protein is Early activation antigen CD69 (Cd69) of Mus musculus (Mouse).